Here is a 406-residue protein sequence, read N- to C-terminus: MRFVDEAVITVEAGDGGNGVASFRREKFVPFGGPDGGDGGRGGSIYIQADDDTSTLVDYRYTRKLRAERGKNGAGANCTGRGGEDVVLKVPVGTTIVDTDSGDIIGDLVEDGQRVMVASGGEGGLGNTHFKSSTNRAPRKCTTGTKGEFREIRLELKVLADVGLLGMPNAGKSTFIRAVSAAKPKVADYPFTTMVPNLGVVDADRHRSFVMADIPGLIEGAAEGAGLGIRFLKHLARTRILLHIIDVQPIDGSDPAHNAKAIMNELAKFSPTLANLPIVLVLNKLDQIAEESREEWCQHILDELQWTGPVFKTSGLLEEGTKEVVYYLMDQIEQQREREVEDPEYAAEVRAFREQLEAETREQTIAAKEAYRAMRKAQRLESMMDDDDDFDDDEDDGDVESIYVRD.

The Obg domain occupies 1–159 (MRFVDEAVIT…REIRLELKVL (159 aa)). Residues 120-143 (GGEGGLGNTHFKSSTNRAPRKCTT) form a disordered region. In terms of domain architecture, OBG-type G spans 160-333 (ADVGLLGMPN…VVYYLMDQIE (174 aa)). GTP-binding positions include 166 to 173 (GMPNAGKS), 191 to 195 (FTTMV), 213 to 216 (DIPG), 283 to 286 (NKLD), and 314 to 316 (SGL). Mg(2+)-binding residues include Ser-173 and Thr-193. The tract at residues 381–406 (ESMMDDDDDFDDDEDDGDVESIYVRD) is disordered. Positions 383-399 (MMDDDDDFDDDEDDGDV) are enriched in acidic residues.

This sequence belongs to the TRAFAC class OBG-HflX-like GTPase superfamily. OBG GTPase family. In terms of assembly, monomer. The cofactor is Mg(2+).

The protein localises to the cytoplasm. In terms of biological role, an essential GTPase which binds GTP, GDP and possibly (p)ppGpp with moderate affinity, with high nucleotide exchange rates and a fairly low GTP hydrolysis rate. Plays a role in control of the cell cycle, stress response, ribosome biogenesis and in those bacteria that undergo differentiation, in morphogenesis control. The protein is GTPase Obg of Acinetobacter baumannii (strain SDF).